Here is a 46-residue protein sequence, read N- to C-terminus: Large ribosomal subunit protein bL36 (46 aa).

The protein belongs to the bacterial ribosomal protein bL36 family.

This Photorhabdus laumondii subsp. laumondii (strain DSM 15139 / CIP 105565 / TT01) (Photorhabdus luminescens subsp. laumondii) protein is Large ribosomal subunit protein bL36.